Reading from the N-terminus, the 199-residue chain is Peroxisomal membrane protein PEX17 (199 aa).

The protein localises to the peroxisome membrane. Its function is as follows. Component of the peroxisomal translocation machinery with PEX13 and PEX14. Interacts indirectly with the PTS1 receptor (PAS10/PEX5) and directly binds to PEX14. Required for import of both PTS1 and PTS2 proteins. The chain is Peroxisomal membrane protein PEX17 (PEX17) from Saccharomyces cerevisiae (strain ATCC 204508 / S288c) (Baker's yeast).